Here is a 358-residue protein sequence, read N- to C-terminus: Methylthioribose-1-phosphate isomerase (358 aa).

Residues Arg-54–Ala-56, Arg-96, and Gln-205 contribute to the substrate site. Asp-246 functions as the Proton donor in the catalytic mechanism. Asn-256–Lys-257 serves as a coordination point for substrate.

The protein belongs to the eIF-2B alpha/beta/delta subunits family. MtnA subfamily.

It catalyses the reaction 5-(methylsulfanyl)-alpha-D-ribose 1-phosphate = 5-(methylsulfanyl)-D-ribulose 1-phosphate. It functions in the pathway amino-acid biosynthesis; L-methionine biosynthesis via salvage pathway; L-methionine from S-methyl-5-thio-alpha-D-ribose 1-phosphate: step 1/6. Catalyzes the interconversion of methylthioribose-1-phosphate (MTR-1-P) into methylthioribulose-1-phosphate (MTRu-1-P). This Pseudomonas syringae pv. tomato (strain ATCC BAA-871 / DC3000) protein is Methylthioribose-1-phosphate isomerase.